The sequence spans 504 residues: Multicopper oxidase MmcO (504 aa).

A signal peptide (tat-type signal) is located at residues 1 to 44 (MPELATSGNAFDKRRFSRRGFLGAGIASGFALAACASKPTASGA). Residues His-120, His-122, His-161, and His-163 each coordinate Cu cation. One can recognise a Plastocyanin-like domain in the interval 190–349 (EWIIILDDWT…NALARALLST (160 aa)). His-437, His-440, His-442, His-485, Cys-486, His-487, and His-491 together coordinate Cu cation.

Belongs to the multicopper oxidase family. The cofactor is Cu cation. In terms of processing, predicted to be exported by the Tat system. The position of the signal peptide cleavage has not been experimentally proven.

The protein resides in the cell inner membrane. It localises to the periplasm. It catalyses the reaction 4 Fe(2+) + O2 + 4 H(+) = 4 Fe(3+) + 2 H2O. Functionally, required for copper resistance. In vitro, oxidizes organic substrates and Fe(2+). May act in vivo by oxidation of toxic periplasmic Cu(+). This Mycobacterium tuberculosis (strain ATCC 25618 / H37Rv) protein is Multicopper oxidase MmcO.